Reading from the N-terminus, the 376-residue chain is tRNA-specific 2-thiouridylase MnmA (376 aa).

Residues 10–17 (GMSGGVDS) and Met36 each bind ATP. The interval 96–98 (NPD) is interaction with target base in tRNA. Cys101 functions as the Nucleophile in the catalytic mechanism. Cys101 and Cys198 are joined by a disulfide. Position 125 (Gly125) interacts with ATP. Residues 148–150 (KDQ) are interaction with tRNA. The active-site Cysteine persulfide intermediate is Cys198. Residues 305–306 (RY) are interaction with tRNA.

This sequence belongs to the MnmA/TRMU family.

The protein localises to the cytoplasm. It catalyses the reaction S-sulfanyl-L-cysteinyl-[protein] + uridine(34) in tRNA + AH2 + ATP = 2-thiouridine(34) in tRNA + L-cysteinyl-[protein] + A + AMP + diphosphate + H(+). In terms of biological role, catalyzes the 2-thiolation of uridine at the wobble position (U34) of tRNA, leading to the formation of s(2)U34. The sequence is that of tRNA-specific 2-thiouridylase MnmA from Protochlamydia amoebophila (strain UWE25).